The primary structure comprises 597 residues: Probable tyrosine-protein phosphatase (597 aa).

Residues 55–81 (VSSSSDAAPTSISTTTTSTTSMTDASA) show a composition bias toward low complexity. Disordered stretches follow at residues 55–89 (VSSS…QQVY), 107–172 (SFSI…PNSL), and 188–228 (STNG…GNNN). Over residues 107-126 (SFSIQPNQTPTMLPTSSYTL) the composition is skewed to polar residues. Residues 136–151 (TSSISSISSTSSNSTS) are compositionally biased toward low complexity. Polar residues-rich tracts occupy residues 188–206 (STNG…NQPR) and 216–228 (KKST…GNNN). Residues 428-579 (GPKNVLNNLI…LMEFGDKLNN (152 aa)) form the Tyrosine-protein phosphatase domain. Catalysis depends on cysteine 516, which acts as the Phosphocysteine intermediate.

Belongs to the protein-tyrosine phosphatase family. Non-receptor class dual specificity subfamily.

It catalyses the reaction O-phospho-L-tyrosyl-[protein] + H2O = L-tyrosyl-[protein] + phosphate. The chain is Probable tyrosine-protein phosphatase (CPP1) from Candida albicans (strain WO-1) (Yeast).